The following is a 308-amino-acid chain: Ribosomal RNA large subunit methyltransferase F (308 aa).

This sequence belongs to the methyltransferase superfamily. METTL16/RlmF family.

Its subcellular location is the cytoplasm. The enzyme catalyses adenosine(1618) in 23S rRNA + S-adenosyl-L-methionine = N(6)-methyladenosine(1618) in 23S rRNA + S-adenosyl-L-homocysteine + H(+). In terms of biological role, specifically methylates the adenine in position 1618 of 23S rRNA. This chain is Ribosomal RNA large subunit methyltransferase F, found in Salmonella agona (strain SL483).